The following is a 296-amino-acid chain: 4-diphosphocytidyl-2-C-methyl-D-erythritol kinase (296 aa).

Residue K18 is part of the active site. 102–112 (PMGGGIGGGSS) contributes to the ATP binding site. D144 is an active-site residue.

Belongs to the GHMP kinase family. IspE subfamily.

The enzyme catalyses 4-CDP-2-C-methyl-D-erythritol + ATP = 4-CDP-2-C-methyl-D-erythritol 2-phosphate + ADP + H(+). It participates in isoprenoid biosynthesis; isopentenyl diphosphate biosynthesis via DXP pathway; isopentenyl diphosphate from 1-deoxy-D-xylulose 5-phosphate: step 3/6. In terms of biological role, catalyzes the phosphorylation of the position 2 hydroxy group of 4-diphosphocytidyl-2C-methyl-D-erythritol. The protein is 4-diphosphocytidyl-2-C-methyl-D-erythritol kinase of Vibrio atlanticus (strain LGP32) (Vibrio splendidus (strain Mel32)).